Here is a 443-residue protein sequence, read N- to C-terminus: Deoxyguanosinetriphosphate triphosphohydrolase-like protein (443 aa).

One can recognise an HD domain in the interval 66–259; that stretch reads RLTHSLEAAQ…MELADDIAYG (194 aa).

This sequence belongs to the dGTPase family. Type 2 subfamily.

The polypeptide is Deoxyguanosinetriphosphate triphosphohydrolase-like protein (Vibrio vulnificus (strain CMCP6)).